A 95-amino-acid chain; its full sequence is Oxytetracycline polyketide synthase acyl carrier protein (95 aa).

The 79-residue stretch at 3–81 (LLTLSDLLTL…ALIEMTNASL (79 aa)) folds into the Carrier domain. Ser-41 is subject to O-(pantetheine 4'-phosphoryl)serine.

In terms of processing, 4'-phosphopantetheine is transferred from CoA to a specific serine of the apo-ACP-like protein.

It participates in antibiotic biosynthesis; oxytetracycline biosynthesis. Functionally, acyl carrier protein. This is Oxytetracycline polyketide synthase acyl carrier protein from Streptomyces rimosus.